The sequence spans 141 residues: Protein stum homolog (141 aa).

The residue at position 26 (Ser-26) is a Phosphoserine. Helical transmembrane passes span 51–71 and 87–107; these read FPVA…GTFV and RHVC…ILTA.

The protein belongs to the SPEC3 family. Stum subfamily.

Its subcellular location is the membrane. This Homo sapiens (Human) protein is Protein stum homolog.